Reading from the N-terminus, the 424-residue chain is D-inositol 3-phosphate glycosyltransferase (424 aa).

His-16 contacts 1D-myo-inositol 3-phosphate. Residues 22–23 and Gly-30 contribute to the UDP-N-acetyl-alpha-D-glucosamine site; that span reads QP. 1D-myo-inositol 3-phosphate contacts are provided by residues 27-32, Lys-85, Tyr-118, Thr-142, and Arg-162; that span reads DAGGMN. 2 residues coordinate UDP-N-acetyl-alpha-D-glucosamine: Arg-240 and Lys-245. Met-313, Arg-314, and Ala-316 together coordinate Mg(2+). Glu-326 and Glu-334 together coordinate UDP-N-acetyl-alpha-D-glucosamine. Thr-340 lines the Mg(2+) pocket.

It belongs to the glycosyltransferase group 1 family. MshA subfamily. As to quaternary structure, homodimer.

It carries out the reaction 1D-myo-inositol 3-phosphate + UDP-N-acetyl-alpha-D-glucosamine = 1D-myo-inositol 2-acetamido-2-deoxy-alpha-D-glucopyranoside 3-phosphate + UDP + H(+). In terms of biological role, catalyzes the transfer of a N-acetyl-glucosamine moiety to 1D-myo-inositol 3-phosphate to produce 1D-myo-inositol 2-acetamido-2-deoxy-glucopyranoside 3-phosphate in the mycothiol biosynthesis pathway. This is D-inositol 3-phosphate glycosyltransferase from Jonesia denitrificans (strain ATCC 14870 / DSM 20603 / BCRC 15368 / CIP 55.134 / JCM 11481 / NBRC 15587 / NCTC 10816 / Prevot 55134) (Listeria denitrificans).